The sequence spans 263 residues: Indole-3-glycerol phosphate synthase (263 aa).

This sequence belongs to the TrpC family.

It catalyses the reaction 1-(2-carboxyphenylamino)-1-deoxy-D-ribulose 5-phosphate + H(+) = (1S,2R)-1-C-(indol-3-yl)glycerol 3-phosphate + CO2 + H2O. It functions in the pathway amino-acid biosynthesis; L-tryptophan biosynthesis; L-tryptophan from chorismate: step 4/5. This Polaromonas naphthalenivorans (strain CJ2) protein is Indole-3-glycerol phosphate synthase.